A 177-amino-acid chain; its full sequence is Ubiquinol-cytochrome c reductase iron-sulfur subunit (177 aa).

A helical membrane pass occupies residues Ile18 to Ile38. Positions Ala88 to Arg175 constitute a Rieske domain. Positions 120, 122, 139, and 142 each coordinate [2Fe-2S] cluster. Residues Cys125 and Cys141 are joined by a disulfide bond.

Belongs to the Rieske iron-sulfur protein family. In terms of assembly, the main subunits of complex b-c1 are: cytochrome b, cytochrome c1 and the Rieske protein. The cofactor is [2Fe-2S] cluster.

Its subcellular location is the cell membrane. The catalysed reaction is a quinol + 2 Fe(III)-[cytochrome c](out) = a quinone + 2 Fe(II)-[cytochrome c](out) + 2 H(+)(out). Functionally, component of the ubiquinol-cytochrome c reductase complex (complex III or cytochrome b-c1 complex), which is a respiratory chain that generates an electrochemical potential coupled to ATP synthesis. The polypeptide is Ubiquinol-cytochrome c reductase iron-sulfur subunit (petA) (Rickettsia prowazekii (strain Madrid E)).